A 256-amino-acid polypeptide reads, in one-letter code: L-erythrulose-1-phosphate isomerase (256 aa).

Residue His96 is the Electrophile of the active site. The Proton acceptor role is filled by Glu169. Substrate-binding residues include Gly175 and Ser212.

The protein belongs to the triosephosphate isomerase family. As to quaternary structure, homodimer.

The protein localises to the cytoplasm. It catalyses the reaction L-erythrulose 1-phosphate = D-erythrulose 4-phosphate. It participates in carbohydrate metabolism; erythritol degradation. Its function is as follows. Catalyzes the isomerization of D-erythrulose-4P to L-erythrulose-1P. This Brucella melitensis biotype 1 (strain ATCC 23456 / CCUG 17765 / NCTC 10094 / 16M) protein is L-erythrulose-1-phosphate isomerase.